The chain runs to 756 residues: Ent-kaur-16-ene synthase, chloroplastic (756 aa).

Residues aspartate 496, aspartate 500, asparagine 639, and glutamate 647 each coordinate Mg(2+). The short motif at 496 to 500 (DDFFD) is the DDXXD motif element.

This sequence belongs to the terpene synthase family. Mg(2+) serves as cofactor. As to expression, highly expressed in panicles and at lower levels in leaves and stems.

The protein resides in the plastid. The protein localises to the chloroplast. It catalyses the reaction ent-copalyl diphosphate = ent-kaur-16-ene + diphosphate. It functions in the pathway plant hormone biosynthesis; gibberellin biosynthesis. Functionally, catalyzes the conversion of ent-copalyl diphosphate to the gibberellin precursor ent-kaur-16-ene. This is Ent-kaur-16-ene synthase, chloroplastic (KS1) from Oryza sativa subsp. japonica (Rice).